Reading from the N-terminus, the 624-residue chain is MACYIYQLPSWVLDDLCRNIDTLSEWDWMQFASYVITDLTQLRKIKSMERVQGVSITRELLWWWSMRQATVQQLVDLLCHLELYRAAQIVLSWKPAPDSLSPLSAFPEAVKPGPVATSGRNLKDDQKKGQPVKPCSFLSSGTTMAGAQQQASCQRPCEEDAPCSLKTDVPDSLQSKYCSTSIPKQEKLLNLPGDRLFWSEADIVQATEDFDQSHRISEGTFADIYRGQRNGVAFAFKRLREVTGSSPGSMDRFLQAEMQLCLRCCHPNILPLLGFCTGRQFHSLIYPYMANGSLQDRLWAQGDSDMLSWPQRASICSGLLLAVEHLHSLDIIHSNVKSANVLLDQHLNPKLAHPVAHPCPTNKKTKYTVMKTHLFQASAAYLPENFIRVGQLTKQVDIFSCGIVLAEVLTGIPAMDKDRSPVYLKDLLLSEIPSNTSSVHSRKTSMGKVVVKEICQKHLERKAGLLPEACAETWATAVSVCLRRREASLEEARVSMAGVEEQLRGQLSLPWSRVSEDTGSSSNTPEETDDVDNSSLSVPSSVMVVSCARVSSPPPSMGNGTAQPSTSGRQEADSSSEACAGPQPPQEATETSWKIEINEAKRRLMENILLYKEEKLDSVELFGP.

One can recognise a Death domain in the interval 13 to 94; the sequence is LDDLCRNIDT…RAAQIVLSWK (82 aa). In terms of domain architecture, Protein kinase spans 210-475; that stretch reads FDQSHRISEG…LPEACAETWA (266 aa). ATP is bound by residues 216 to 224, Lys237, and 337 to 340; these read ISEGTFADI and KSAN. Disordered stretches follow at residues 508 to 536 and 549 to 593; these read SLPW…NSSL and RVSS…ETSW. Polar residues predominate over residues 558–577; that stretch reads GNGTAQPSTSGRQEADSSSE.

The protein belongs to the protein kinase superfamily. TKL Ser/Thr protein kinase family. Pelle subfamily. As to quaternary structure, interacts with MYD88. IL-1 stimulation leads to the formation of a signaling complex which dissociates from the IL-1 receptor following the binding of PELI1.

In terms of biological role, binds to the IL-1 type I receptor following IL-1 engagement, triggering intracellular signaling cascades leading to transcriptional up-regulation and mRNA stabilization. In Rattus norvegicus (Rat), this protein is Interleukin-1 receptor-associated kinase-like 2 (Irak2).